The primary structure comprises 240 residues: Homeobox protein goosecoid (240 aa).

A DNA-binding region (homeobox) is located at residues 146–205 (KRRHRTIFTDEQLEALENLFQETKYPDVGTREQLARKVHLREEKVEVWFKNRRAKWRRQK). The interval 199-240 (AKWRRQKRSSSEESENSQKWNKSTKTTSEKIEEGKSDVDSDS) is disordered. A compositionally biased stretch (basic and acidic residues) spans 225 to 240 (TSEKIEEGKSDVDSDS).

Belongs to the paired homeobox family. Bicoid subfamily.

The protein localises to the nucleus. The chain is Homeobox protein goosecoid (gsc) from Danio rerio (Zebrafish).